We begin with the raw amino-acid sequence, 200 residues long: Golgi to ER traffic protein 1 (200 aa).

Residues 1 to 6 (MEPYTL) lie on the Lumenal side of the membrane. A helical membrane pass occupies residues 7–26 (LLFIFVIQIVKQIISAVGKQ). Residues 27 to 113 (SIESISWVLY…KVNTFTGYLI (87 aa)) are Cytoplasmic-facing. A coiled-coil region spans residues 75 to 107 (AKWTKLNRQHDKLVAEIEQLQKEVDLDKVKVNT). The helical transmembrane segment at 114-134 (AILTSIPIWFFRVWYRSVVLF) threads the bilayer. The Lumenal segment spans residues 135–158 (YFPPGILPRALEWSIALPFTVTGG). The chain crosses the membrane as a helical span at residues 159–175 (VSLTVWMMAAGAVASSL). At 176 to 200 (TFLFMFPFEKAVPKPVLAKKSPQQL) the chain is on the cytoplasmic side.

It belongs to the WRB/GET1 family. As to quaternary structure, component of the Golgi to ER traffic (GET) complex, which is composed of GET1, GET2 and GET3. Within the complex, GET1 and GET2 form a heterotetramer which is stabilized by phosphatidylinositol binding and which binds to the GET3 homodimer.

Its subcellular location is the endoplasmic reticulum membrane. The protein resides in the golgi apparatus membrane. Required for the post-translational delivery of tail-anchored (TA) proteins to the endoplasmic reticulum. Together with GET2, acts as a membrane receptor for soluble GET3, which recognizes and selectively binds the transmembrane domain of TA proteins in the cytosol. The GET complex cooperates with the HDEL receptor ERD2 to mediate the ATP-dependent retrieval of resident ER proteins that contain a C-terminal H-D-E-L retention signal from the Golgi to the ER. The polypeptide is Golgi to ER traffic protein 1 (Meyerozyma guilliermondii (strain ATCC 6260 / CBS 566 / DSM 6381 / JCM 1539 / NBRC 10279 / NRRL Y-324) (Yeast)).